The following is a 163-amino-acid chain: Regulatory protein RecX (163 aa).

The segment at M1 to V21 is disordered.

This sequence belongs to the RecX family.

It localises to the cytoplasm. Functionally, modulates RecA activity. This is Regulatory protein RecX from Stenotrophomonas maltophilia (strain R551-3).